The primary structure comprises 118 residues: Large ribosomal subunit protein bL19 (118 aa).

It belongs to the bacterial ribosomal protein bL19 family.

In terms of biological role, this protein is located at the 30S-50S ribosomal subunit interface and may play a role in the structure and function of the aminoacyl-tRNA binding site. This Metamycoplasma arthritidis (strain 158L3-1) (Mycoplasma arthritidis) protein is Large ribosomal subunit protein bL19.